The primary structure comprises 335 residues: Sphingomyelinase C (335 aa).

Positions 1 to 28 (MEKFKIIKTIPKICGAFIFLLFFTFLFG) are cleaved as a signal peptide.

It belongs to the neutral sphingomyelinase family.

The protein localises to the secreted. It carries out the reaction a sphingomyelin + H2O = phosphocholine + an N-acylsphing-4-enine + H(+). Virulence factor that promotes intracellular proliferation by mediating the disruption of the phagocytic vacuole and the release of bacteria into the host cell cytosol. May act in concert with the phospholipases PlcA and PlcB and the hemolysin hly to mediate efficient escape from the vacuole. This Listeria ivanovii protein is Sphingomyelinase C (smcL).